A 187-amino-acid polypeptide reads, in one-letter code: UPF0301 protein VS_2679 (187 aa).

This sequence belongs to the UPF0301 (AlgH) family.

The polypeptide is UPF0301 protein VS_2679 (Vibrio atlanticus (strain LGP32) (Vibrio splendidus (strain Mel32))).